Consider the following 486-residue polypeptide: Probable cytosol aminopeptidase (486 aa).

K256 and D261 together coordinate Mn(2+). K268 is an active-site residue. Positions 280, 339, and 341 each coordinate Mn(2+). The active site involves R343.

This sequence belongs to the peptidase M17 family. Mn(2+) is required as a cofactor.

It localises to the cytoplasm. It catalyses the reaction Release of an N-terminal amino acid, Xaa-|-Yaa-, in which Xaa is preferably Leu, but may be other amino acids including Pro although not Arg or Lys, and Yaa may be Pro. Amino acid amides and methyl esters are also readily hydrolyzed, but rates on arylamides are exceedingly low.. The enzyme catalyses Release of an N-terminal amino acid, preferentially leucine, but not glutamic or aspartic acids.. Its function is as follows. Presumably involved in the processing and regular turnover of intracellular proteins. Catalyzes the removal of unsubstituted N-terminal amino acids from various peptides. This chain is Probable cytosol aminopeptidase, found in Synechococcus sp. (strain ATCC 27144 / PCC 6301 / SAUG 1402/1) (Anacystis nidulans).